A 971-amino-acid chain; its full sequence is Dynamin-like GTPase OPA1, mitochondrial (971 aa).

The N-terminal 89 residues, 1-89 (MLRVGRAVAC…GGWRYQQHRS (89 aa)), are a transit peptide targeting the mitochondrion. Residues 90–98 (FWMLRLASR) are Mitochondrial matrix-facing. The chain crosses the membrane as a helical span at residues 99–115 (LLKLRYIVLGSAVGGGY). Over 116–781 (TAKKTYEEWK…SVINDMVGPD (666 aa)) the chain is Mitochondrial intermembrane. Residues 204 to 224 (EAPVTATPEASDKQFKKSSDK) form a disordered region. Over residues 213–224 (ASDKQFKKSSDK) the composition is skewed to basic and acidic residues. Positions 219 to 265 (KKSSDKEKVDQLQEELLRTQMKYQRMLERLEKENKDLRKVVLQKDEK) form a coiled coil. The region spanning 297-572 (QDHLPRVVVV…FWKMVRESVE (276 aa)) is the Dynamin-type G domain. The interval 307–314 (GDQSAGKT) is G1 motif. Positions 310, 312, 313, 314, 315, and 329 each coordinate GTP. Threonine 314 is a Mg(2+) binding site. Positions 333-336 (MMTR) are G2 motif. Mg(2+)-binding residues include threonine 335 and aspartate 410. Residues 410–413 (DLPG) form a G3 motif region. Residues 478–481 (TKVD) are G4 motif. Residues lysine 479, aspartate 481, and threonine 514 each contribute to the GTP site. Positions 512-515 (VVTG) are G5 motif. Stalk region stretches follow at residues 600-847 (DRNE…IKDT) and 885-939 (CNDV…VHLI). Positions 747–867 (TDKPQWDAAI…QKALQHCNLC (121 aa)) are paddle region. An intramembrane segment occupies 782–792 (WKQRWMSWKNR). At 793 to 971 (SPEQHTRNET…AFIEALHKEK (179 aa)) the chain is on the mitochondrial intermembrane side. A disulfide bridge connects residues cysteine 867 and cysteine 885. Positions 906 to 971 (RQQLTNTEVR…AFIEALHKEK (66 aa)) form a coiled coil.

This sequence belongs to the TRAFAC class dynamin-like GTPase superfamily. Dynamin/Fzo/YdjA family. As to quaternary structure, oligomeric complex consisting of membrane-bound and soluble forms of OPA1. Post-translationally, cleaved by OMA1 or YME1L downstream of the transmembrane region in response to different signals to generate soluble forms. Cleaved by OMA1 at position S1 following stress conditions, generating the short soluble form (Dynamin-like GTPase OPA1, short form; S-OPA1). Strongly expressed in the brain, ovary and skeletal muscle. In the brain, expression of the mRNA was observed specifically in motor neurons, in nucleus oculomotorius, in nucleus valvulae lateralis, in the medulla oblongata and in the spinal cord.

The protein localises to the mitochondrion inner membrane. The protein resides in the mitochondrion intermembrane space. It catalyses the reaction GTP + H2O = GDP + phosphate + H(+). Dynamin-related GTPase that is essential for normal mitochondrial morphology by mediating fusion of the mitochondrial inner membranes, regulating cristae morphology and maintaining respiratory chain function. Exists in two forms: the transmembrane, long form (Dynamin-like GTPase OPA1, long form; L-OPA1), which is tethered to the inner mitochondrial membrane, and the short soluble form (Dynamin-like GTPase OPA1, short form; S-OPA1), which results from proteolytic cleavage and localizes in the intermembrane space. Both forms (L-OPA1 and S-OPA1) cooperate to catalyze the fusion of the mitochondrial inner membrane. The equilibrium between L-OPA1 and S-OPA1 is essential: excess levels of S-OPA1, produced by cleavage by OMA1 following loss of mitochondrial membrane potential, lead to an impaired equilibrium between L-OPA1 and S-OPA1, inhibiting mitochondrial fusion. The balance between L-OPA1 and S-OPA1 also influences cristae shape and morphology. Its role in mitochondrial morphology is required for mitochondrial genome maintenance. Its function is as follows. Constitutes the transmembrane long form (L-OPA1) that plays a central role in mitochondrial inner membrane fusion and cristae morphology. L-OPA1 and the soluble short form (S-OPA1) form higher-order helical assemblies that coordinate the fusion of mitochondrial inner membranes. Inner membrane-anchored L-OPA1 molecules initiate membrane remodeling by recruiting soluble S-OPA1 to rapidly polymerize into a flexible cylindrical scaffold encaging the mitochondrial inner membrane. Once at the membrane surface, the formation of S-OPA1 helices induce bilayer curvature. OPA1 dimerization through the paddle region, which inserts into cardiolipin-containing membrane, promotes GTP hydrolysis and the helical assembly of a flexible OPA1 lattice on the membrane, which drives membrane curvature and mitochondrial fusion. Plays a role in the maintenance and remodeling of mitochondrial cristae, some invaginations of the mitochondrial inner membrane that provide an increase in the surface area. Probably acts by forming helical filaments at the inside of inner membrane tubes with the shape and dimensions of crista junctions. In terms of biological role, constitutes the soluble short form (S-OPA1) generated by cleavage by OMA1, which plays a central role in mitochondrial inner membrane fusion and cristae morphology. The transmembrane long form (L-OPA1) and the S-OPA1 form higher-order helical assemblies that coordinate the fusion of mitochondrial inner membranes. Inner membrane-anchored L-OPA1 molecules initiate membrane remodeling by recruiting soluble S-OPA1 to rapidly polymerize into a flexible cylindrical scaffold encaging the mitochondrial inner membrane. Once at the membrane surface, the formation of S-OPA1 helices induce bilayer curvature. OPA1 dimerization through the paddle region, which inserts into cardiolipin-containing membrane, promotes GTP hydrolysis and the helical assembly of a flexible OPA1 lattice on the membrane, which drives membrane curvature and mitochondrial fusion. Excess levels of S-OPA1 produced by cleavage by OMA1 following stress conditions that induce loss of mitochondrial membrane potential, lead to an impaired equilibrium between L-OPA1 and S-OPA1, thereby inhibiting mitochondrial fusion. Plays a role in the maintenance and remodeling of mitochondrial cristae, some invaginations of the mitochondrial inner membrane that provide an increase in the surface area. Probably acts by forming helical filaments at the inside of inner membrane tubes with the shape and dimensions of crista junctions. This Oncorhynchus masou (Cherry salmon) protein is Dynamin-like GTPase OPA1, mitochondrial (opa1).